The sequence spans 351 residues: Prostaglandin reductase 2 (351 aa).

Residue 99–100 (FY) coordinates substrate. Residues 165-168 (GACG), lysine 192, tyrosine 208, asparagine 231, 253-259 (CGQISQY), 287-289 (FTV), and asparagine 337 contribute to the NADP(+) site. 288–290 (TVL) serves as a coordination point for substrate.

This sequence belongs to the NADP-dependent oxidoreductase L4BD family. Monomer. In terms of tissue distribution, widely expressed with highest levels in adipose tissues.

It localises to the cytoplasm. It catalyses the reaction 13,14-dihydro-15-oxo-prostaglandin E2 + NAD(+) = 15-oxoprostaglandin E2 + NADH + H(+). It carries out the reaction 13,14-dihydro-15-oxo-prostaglandin E2 + NADP(+) = 15-oxoprostaglandin E2 + NADPH + H(+). The catalysed reaction is 13,14-dihydro-15-oxo-PGF2alpha + NADP(+) = 15-oxoprostaglandin F2alpha + NADPH + H(+). The enzyme catalyses 13,14-dihydro-15-oxo-prostaglandin E1 + NADP(+) = 15-oxoprostaglandin E1 + NADPH + H(+). It catalyses the reaction 13,14-dihydro-15-oxo-prostaglandin F1alpha + NADP(+) = 15-oxoprostaglandin F1alpha + NADPH + H(+). Functions as 15-oxo-prostaglandin 13-reductase and acts on 15-keto-PGE1, 15-keto-PGE2, 15-keto-PGE1-alpha and 15-keto-PGE2-alpha with highest activity towards 15-keto-PGE2. Overexpression represses transcriptional activity of PPARG and inhibits adipocyte differentiation. The polypeptide is Prostaglandin reductase 2 (Mus musculus (Mouse)).